A 265-amino-acid polypeptide reads, in one-letter code: NAD kinase (265 aa).

The active-site Proton acceptor is the D45. Residues 45–46, 122–123, R148, D150, 161–166, and A185 each bind NAD(+); these read DG, NE, and TAYSKS.

The protein belongs to the NAD kinase family. The cofactor is a divalent metal cation.

It is found in the cytoplasm. It carries out the reaction NAD(+) + ATP = ADP + NADP(+) + H(+). Functionally, involved in the regulation of the intracellular balance of NAD and NADP, and is a key enzyme in the biosynthesis of NADP. Catalyzes specifically the phosphorylation on 2'-hydroxyl of the adenosine moiety of NAD to yield NADP. This is NAD kinase from Lactobacillus delbrueckii subsp. bulgaricus (strain ATCC 11842 / DSM 20081 / BCRC 10696 / JCM 1002 / NBRC 13953 / NCIMB 11778 / NCTC 12712 / WDCM 00102 / Lb 14).